Reading from the N-terminus, the 257-residue chain is 5-oxoprolinase subunit A (257 aa).

The protein belongs to the LamB/PxpA family. As to quaternary structure, forms a complex composed of PxpA, PxpB and PxpC.

It carries out the reaction 5-oxo-L-proline + ATP + 2 H2O = L-glutamate + ADP + phosphate + H(+). Its function is as follows. Catalyzes the cleavage of 5-oxoproline to form L-glutamate coupled to the hydrolysis of ATP to ADP and inorganic phosphate. In Pectobacterium atrosepticum (strain SCRI 1043 / ATCC BAA-672) (Erwinia carotovora subsp. atroseptica), this protein is 5-oxoprolinase subunit A.